The chain runs to 265 residues: Pyridoxine 5'-phosphate synthase (265 aa).

Asparagine 6 lines the 3-amino-2-oxopropyl phosphate pocket. Residue 8-9 (DH) participates in 1-deoxy-D-xylulose 5-phosphate binding. Arginine 17 contributes to the 3-amino-2-oxopropyl phosphate binding site. The active-site Proton acceptor is the histidine 42. The 1-deoxy-D-xylulose 5-phosphate site is built by arginine 44 and histidine 49. Glutamate 69 serves as the catalytic Proton acceptor. Threonine 99 contributes to the 1-deoxy-D-xylulose 5-phosphate binding site. Histidine 213 (proton donor) is an active-site residue. 3-amino-2-oxopropyl phosphate is bound by residues glycine 214 and 235 to 236 (GQ).

This sequence belongs to the PNP synthase family. In terms of assembly, homooctamer; tetramer of dimers.

The protein resides in the cytoplasm. The enzyme catalyses 3-amino-2-oxopropyl phosphate + 1-deoxy-D-xylulose 5-phosphate = pyridoxine 5'-phosphate + phosphate + 2 H2O + H(+). It functions in the pathway cofactor biosynthesis; pyridoxine 5'-phosphate biosynthesis; pyridoxine 5'-phosphate from D-erythrose 4-phosphate: step 5/5. Functionally, catalyzes the complicated ring closure reaction between the two acyclic compounds 1-deoxy-D-xylulose-5-phosphate (DXP) and 3-amino-2-oxopropyl phosphate (1-amino-acetone-3-phosphate or AAP) to form pyridoxine 5'-phosphate (PNP) and inorganic phosphate. The protein is Pyridoxine 5'-phosphate synthase of Nitratiruptor sp. (strain SB155-2).